The following is a 293-amino-acid chain: Ribosomal protein L11 methyltransferase (293 aa).

S-adenosyl-L-methionine is bound by residues Thr145, Gly166, Asp188, and Asn230.

Belongs to the methyltransferase superfamily. PrmA family.

It is found in the cytoplasm. It carries out the reaction L-lysyl-[protein] + 3 S-adenosyl-L-methionine = N(6),N(6),N(6)-trimethyl-L-lysyl-[protein] + 3 S-adenosyl-L-homocysteine + 3 H(+). Functionally, methylates ribosomal protein L11. This Shewanella sediminis (strain HAW-EB3) protein is Ribosomal protein L11 methyltransferase.